The sequence spans 122 residues: Large ribosomal subunit protein uL14 (122 aa).

The protein belongs to the universal ribosomal protein uL14 family. In terms of assembly, part of the 50S ribosomal subunit. Forms a cluster with proteins L3 and L19. In the 70S ribosome, L14 and L19 interact and together make contacts with the 16S rRNA in bridges B5 and B8.

Functionally, binds to 23S rRNA. Forms part of two intersubunit bridges in the 70S ribosome. The protein is Large ribosomal subunit protein uL14 of Corynebacterium diphtheriae (strain ATCC 700971 / NCTC 13129 / Biotype gravis).